We begin with the raw amino-acid sequence, 749 residues long: MSGNHTPSASGPFSALTPSIWPQEILAKSSQKEDSSEPEICYDEFGFRVDKEGSEPGCSQMAGTPLVEDPPQRLRWQAHLEFTHNHDVGDLTWDKIAVSLPRSEKLRSLVLAGIPHGMRPQLWMRLSGALQKKKNSELSYREIVKNSSNDETIAAKQIEKDLLRTMPSNACFANVNSIGVPRLRRVLRALAWLYPEIGYCQGTGMVAACLLLFLEEEDAFWMMCAIIEDLLPASYFSTTLLGVQTDQRVLRHLIVQYLPRLDKLLQEHDIELSLITLHWFLTAFASVVHIRLLLRIWDLFFYEGSLVLFQTTLGMLRLKEEELIQSENSASIFNTLSDIPAQMDDAELLLGEAMQLAGSLTDVAVETQRRKHLAYLIADQGQTLGTSTTTSLSQVVRRRTQRRKSGITSLLFGEDDLEALKAKNIKQTELVADLREAILRVARHFQCTDPKNCSVELTPDYSMESHQRDHENYVACLRSHRRRAKALLDFERHDDDELGFRKNDIITIISQKDEHCWVGELNGLRGWFPAKFVEVLDERSKEYSIAGDDSVTEGVTDLVRGTLCPALKALFEHGLKKPSLLGGACHPWLFIEEAAGREVERDFDSVYSRLVLCKTYRLDEDGKVLTPEELLYRAVQSVNVTHDAAHAQMDVKLRSLICVGLNEQVLHLWLEVLCSSLPTVEKWYQPWSFLRSPGWVQIKCELRVLCCFAFSLSQDWELPAKREEEKQPLKEGVQDMLVKHHLFSWDIDG.

The region spanning 113-304 is the Rab-GAP TBC domain; that stretch reads GIPHGMRPQL…RIWDLFFYEG (192 aa). Serine 405 carries the phosphoserine modification. A coiled-coil region spans residues 414 to 438; sequence EDDLEALKAKNIKQTELVADLREAI. An SH3 domain is found at 479–538; the sequence is SHRRRAKALLDFERHDDDELGFRKNDIITIISQKDEHCWVGELNGLRGWFPAKFVEVLDE. In terms of domain architecture, RUN spans 554-717; sequence GVTDLVRGTL…FAFSLSQDWE (164 aa).

This sequence belongs to the small G protein signaling modulator family. In terms of assembly, interacts with GJA1. Interaction with GJA1 induces its degradation. Interacts (via RUN domain) with NF2 (via C-terminus). Interacts with RAB3A, RAB4A, RAB5A, RAB8A, RAB11A, RAP1A, RAP1B, RAP2A, RAP2B and PDCD6I. No interaction with RAB27A. No interaction with GJB1 or GJD2. Expressed in brain, liver, kidney and testis. Moderately expressed in heart, very weakly in lung and muscle. Not expressed in spleen.

The protein resides in the cytoplasm. In terms of biological role, may play a cooperative role in NF2-mediated growth suppression of cells. May act as a modulator of small G protein RAB- and RAP-mediated neuronal signal transduction and vesicular transportation pathways. The protein is Small G protein signaling modulator 3 of Rattus norvegicus (Rat).